We begin with the raw amino-acid sequence, 192 residues long: uncharacterized protein (192 aa).

It belongs to the CAPAB/TerDEXZ family.

This is an uncharacterized protein from Bacillus subtilis (strain 168).